Consider the following 338-residue polypeptide: DNA-directed RNA polymerase subunit alpha (338 aa).

The tract at residues 1 to 226 (MLIAQRPSLT…ELFGLARELN (226 aa)) is alpha N-terminal domain (alpha-NTD). An alpha C-terminal domain (alpha-CTD) region spans residues 243-338 (LAADLVMPIE…DAGFLETEHY (96 aa)).

The protein belongs to the RNA polymerase alpha chain family. In terms of assembly, homodimer. The RNAP catalytic core consists of 2 alpha, 1 beta, 1 beta' and 1 omega subunit. When a sigma factor is associated with the core the holoenzyme is formed, which can initiate transcription.

It catalyses the reaction RNA(n) + a ribonucleoside 5'-triphosphate = RNA(n+1) + diphosphate. DNA-dependent RNA polymerase catalyzes the transcription of DNA into RNA using the four ribonucleoside triphosphates as substrates. The chain is DNA-directed RNA polymerase subunit alpha from Streptomyces avermitilis (strain ATCC 31267 / DSM 46492 / JCM 5070 / NBRC 14893 / NCIMB 12804 / NRRL 8165 / MA-4680).